Reading from the N-terminus, the 3179-residue chain is Guanylate cyclase beta (3179 aa).

Residues 1 to 60 are Cytoplasmic-facing; it reads MKTQTLSLMNINGKRKFLGTNNKIYRKVIINPTSEDDIQKFCRNYFRIYNFSLYNFIRRL. Residues 61-81 traverse the membrane as a helical segment; sequence ISFDAILVYSLFLTVYIFSEI. Topologically, residues 82–88 are extracellular; that stretch reads NHGETKK. Residues 89 to 109 form a helical membrane-spanning segment; it reads YLFIDTAISLFFNIILLIVIE. Topologically, residues 110–295 are cytoplasmic; sequence SLFELKKLKD…FCIKMNNIVY (186 aa). The helical transmembrane segment at 296 to 316 threads the bilayer; it reads YLIFMYFVFVVLSIVIKTIFF. The Extracellular portion of the chain corresponds to 317-328; sequence HKKNSFQNSRDS. Residues 329-349 form a helical membrane-spanning segment; it reads FLSMLEDFVGLYILVLPIMMY. Residues 350 to 988 lie on the Cytoplasmic side of the membrane; it reads SEKSLIYIIQ…GRLNRFSLCK (639 aa). The helical transmembrane segment at 989-1009 threads the bilayer; it reads VFLWIIYLKITVVSFYFFHNF. Over 1010 to 1020 the chain is Extracellular; the sequence is DNYFSGSSASS. The chain crosses the membrane as a helical span at residues 1021 to 1041; it reads ILYTQTTFALLHYFLIIAFSA. Over 1042–1069 the chain is Cytoplasmic; the sequence is YEIDLPYKFVRRLPYIYQLSRRKYFLNN. The chain crosses the membrane as a helical span at residues 1070 to 1090; the sequence is NIILLTIIEAILISLTSYYIL. Topologically, residues 1091–1102 are extracellular; that stretch reads RLNVFHLITHRE. The chain crosses the membrane as a helical span at residues 1103 to 1123; the sequence is FTFHIFILNVFITTEKILLLS. Residues 1124–1127 are Cytoplasmic-facing; sequence KTWH. The helical transmembrane segment at 1128-1148 threads the bilayer; the sequence is IYFFIMAVLIIGILLIYVNIF. The Extracellular segment spans residues 1149–1168; sequence TLVDCIKNGKCEFSLFQMEN. The helical transmembrane segment at 1169 to 1189 threads the bilayer; it reads IYFWTSLFPILYINFIFDKLM. Residues 1190–1304 lie on the Cytoplasmic side of the membrane; that stretch reads KYIKNRIYPD…YEKGNKLKLR (115 aa). A helical transmembrane segment spans residues 1305–1325; it reads IIVILLFLIYIIIFSSQTIID. Topologically, residues 1326–1331 are extracellular; the sequence is INTKSN. The helical transmembrane segment at 1332–1352 threads the bilayer; the sequence is IHYITMFYIIYFVLACVLLIY. The Cytoplasmic segment spans residues 1353 to 1360; sequence IRIRNKAT. Residues 1361–1381 form a helical membrane-spanning segment; the sequence is STFFFFLSRFLLICGFCIELY. Residues 1382–1401 lie on the Extracellular side of the membrane; it reads DNISNDILNVLITYSFTVSY. N-linked (GlcNAc...) asparagine glycosylation is present at asparagine 1383. Residues 1402–1422 form a helical membrane-spanning segment; sequence IFFMSFKILEALLVCISILLL. The Cytoplasmic segment spans residues 1423–1464; sequence TFGVYYEKNKNMIDICTHFCSNPYLSINNLDHMNISCLCKKQ. The chain crosses the membrane as a helical span at residues 1465-1485; the sequence is IVIFLISLLSFTLICLSMKYY. Over 1486 to 1507 the chain is Extracellular; it reads EIFYLKKKFLFRYKQKVNLAKQ. A helical membrane pass occupies residues 1508–1528; it reads IEILHTMLPNFLVEYLLISDP. Over 1529-2739 the chain is Cytoplasmic; sequence KNDGIMVGKN…IINIDLTKKL (1211 aa). Residues 1548–1700 enclose the Guanylate cyclase 1 domain; sequence SVIFCDIDDF…DTVNTASRMK (153 aa). Disordered regions lie at residues 2123–2153, 2355–2379, and 2576–2656; these read LHNYNPMKNKNKNKKNNKNVRRNEYPNYTSS, SINKQTERKPKKKNKKNIENKKDKK, and KDSD…HHHS. The span at 2131–2142 shows a compositional bias: basic residues; that stretch reads NKNKNKKNNKNV. Residues 2584 to 2607 are compositionally biased toward low complexity; sequence NNNKISKNRYNNNNNNNNSNYSNI. A compositionally biased stretch (basic residues) spans 2614 to 2645; sequence HNNKKNHHHNNNKYHHHNNNKYHHHNNNKYHH. A helical membrane pass occupies residues 2740 to 2760; that stretch reads IIIFIFTEIFLSLCNIIELSF. At 2761–2770 the chain is on the extracellular side; sequence YEKKLRYNDS. Residue asparagine 2768 is glycosylated (N-linked (GlcNAc...) asparagine). The chain crosses the membrane as a helical span at residues 2771–2791; the sequence is IVIIWLIRSIYLFIITYIWII. The Cytoplasmic segment spans residues 2792–2809; the sequence is LKTKLKEYKNNSSKMMWT. Residues 2810-2830 traverse the membrane as a helical segment; it reads IFILNIFLCSWGIILIDLSCI. At 2831–2842 the chain is on the extracellular side; it reads HYSMLLGNKNER. Residues 2843–2863 traverse the membrane as a helical segment; it reads ALFFMKDASELIICIQLIFIK. The Cytoplasmic segment spans residues 2864-2870; that stretch reads NMLFKHK. The chain crosses the membrane as a helical span at residues 2871–2891; that stretch reads FFFFVFFYIFLIYSFSKLFSI. At 2892 to 2895 the chain is on the extracellular side; the sequence is HTCQ. The chain crosses the membrane as a helical span at residues 2896–2916; the sequence is THICCSIILFISINILYFWYS. Residues 2917–3179 lie on the Cytoplasmic side of the membrane; it reads EYLDRIQFLV…KLRQKKGLRS (263 aa). In terms of domain architecture, Guanylate cyclase 2 spans 2968–3102; it reads AFLFADIVGF…LDVLIANKIE (135 aa). Residues aspartate 2973, isoleucine 2974, and aspartate 3017 each contribute to the Mg(2+) site.

In the N-terminal section; belongs to the cation transport ATPase (P-type) (TC 3.A.3) family. Type IV subfamily. This sequence in the C-terminal section; belongs to the adenylyl cyclase class-4/guanylyl cyclase family. It depends on Mg(2+) as a cofactor. The cofactor is Mn(2+).

The protein localises to the membrane. It carries out the reaction GTP = 3',5'-cyclic GMP + diphosphate. Its activity is regulated as follows. Basal guanylate activity of the recombinant guanylate cyclase domains 1 and 2 is not modulated by an increase in Ca(2+) levels or by the gametogenesis inducer xanthurenic acid. Functionally, catalyzes the synthesis of the second messenger cGMP from GTP. Regulates cGMP production in gametocytes; however, is dispensable for the initiation of gametogenesis. Does not have adenylate cyclase activity. The protein is Guanylate cyclase beta of Plasmodium falciparum (isolate 3D7).